A 230-amino-acid chain; its full sequence is NAD(P)H-hydrate epimerase (230 aa).

The YjeF N-terminal domain maps to 11-218 (AIAVDQELFN…ALQRKYELNL (208 aa)). 61 to 65 (NNGGD) contributes to the (6S)-NADPHX binding site. K(+) contacts are provided by N62 and D126. (6S)-NADPHX-binding positions include 130–136 (GFSFKPP) and D159. S162 serves as a coordination point for K(+).

The protein belongs to the NnrE/AIBP family. The cofactor is K(+).

It carries out the reaction (6R)-NADHX = (6S)-NADHX. The enzyme catalyses (6R)-NADPHX = (6S)-NADPHX. Functionally, catalyzes the epimerization of the S- and R-forms of NAD(P)HX, a damaged form of NAD(P)H that is a result of enzymatic or heat-dependent hydration. This is a prerequisite for the S-specific NAD(P)H-hydrate dehydratase to allow the repair of both epimers of NAD(P)HX. In Drosophila melanogaster (Fruit fly), this protein is NAD(P)H-hydrate epimerase.